We begin with the raw amino-acid sequence, 418 residues long: Tyrosine--tRNA ligase (418 aa).

Y34 is an L-tyrosine binding site. The short motif at 39 to 48 (PTADSLHLGH) is the 'HIGH' region element. Residues Y169 and Q173 each contribute to the L-tyrosine site. Positions 229-233 (KFGKS) match the 'KMSKS' region motif. Position 232 (K232) interacts with ATP. Positions 352 to 418 (LNLVDMLVTA…GKKKYAVLTY (67 aa)) constitute an S4 RNA-binding domain.

This sequence belongs to the class-I aminoacyl-tRNA synthetase family. TyrS type 1 subfamily. In terms of assembly, homodimer.

It localises to the cytoplasm. The catalysed reaction is tRNA(Tyr) + L-tyrosine + ATP = L-tyrosyl-tRNA(Tyr) + AMP + diphosphate + H(+). In terms of biological role, catalyzes the attachment of tyrosine to tRNA(Tyr) in a two-step reaction: tyrosine is first activated by ATP to form Tyr-AMP and then transferred to the acceptor end of tRNA(Tyr). In Streptococcus pyogenes serotype M28 (strain MGAS6180), this protein is Tyrosine--tRNA ligase.